A 535-amino-acid chain; its full sequence is UDP-glycosyltransferase stmC (535 aa).

Residues Asn70 and Asn422 are each glycosylated (N-linked (GlcNAc...) asparagine). Residues 506–526 traverse the membrane as a helical segment; the sequence is ASNLDLYIVCIAFVAVPVGVA.

It belongs to the glycosyltransferase 28 family.

It is found in the membrane. It carries out the reaction stromemycin aglycone + UDP-alpha-D-glucose = stromemycin + UDP + H(+). The catalysed reaction is exophillate aglycone + UDP-alpha-D-glucose = exophillate + UDP + H(+). The protein operates within mycotoxin biosynthesis. In terms of biological role, UDP-glycosyltransferase; part of the gene cluster that mediates the biosynthesis of stromemycin, a depside C-glucoside with two unsaturated C9 side chains belonging to aromatic polyketide glycosides. Acts as the tailoring enzyme responsible for 3-C-glucosylation of bininalkenylresorcylic acid produced by the combined action of the HR-PKS stmA and the NR-PKS stmB to yield stromemycin. Possesses a relatively strict acceptor specificity towards bininalkenylresorcylic acid for C-glycosylation, but is able to use several donors including UDP-alpha-D-galactose, UDP-alpha-D-xylose, UDP-alpha-D-4-keto-6-deoxyglucose, UDP-alpha-D-quinovose, and UDP-beta-L-rhamnose. The chain is UDP-glycosyltransferase stmC from Aspergillus ustus.